The sequence spans 496 residues: Glutamyl-tRNA(Gln) amidotransferase subunit A (496 aa).

Catalysis depends on charge relay system residues K79 and S159. Catalysis depends on S183, which acts as the Acyl-ester intermediate.

This sequence belongs to the amidase family. GatA subfamily. As to quaternary structure, heterotrimer of A, B and C subunits.

The enzyme catalyses L-glutamyl-tRNA(Gln) + L-glutamine + ATP + H2O = L-glutaminyl-tRNA(Gln) + L-glutamate + ADP + phosphate + H(+). Its function is as follows. Allows the formation of correctly charged Gln-tRNA(Gln) through the transamidation of misacylated Glu-tRNA(Gln) in organisms which lack glutaminyl-tRNA synthetase. The reaction takes place in the presence of glutamine and ATP through an activated gamma-phospho-Glu-tRNA(Gln). The chain is Glutamyl-tRNA(Gln) amidotransferase subunit A from Bartonella quintana (strain Toulouse) (Rochalimaea quintana).